The primary structure comprises 191 residues: uncharacterized protein (191 aa).

Disordered regions lie at residues 1 to 42 (MSEE…DADA) and 145 to 191 (QNQE…IDLD). 2 stretches are compositionally biased toward basic and acidic residues: residues 11-26 (PRPD…RATG) and 147-178 (QERR…RDEG).

It may form a heterotetramer of two glucokinase subunits (glk) with two ORF2 proteins.

In terms of biological role, may be involved in glucose transport or metabolism. This is an uncharacterized protein from Streptomyces coelicolor (strain ATCC BAA-471 / A3(2) / M145).